A 477-amino-acid polypeptide reads, in one-letter code: Protoporphyrinogen oxidase (477 aa).

Residues 9–14, W42, 57–60, V257, A449, and 454–456 contribute to the FAD site; these read GGGISG, GPRG, and VAV.

The protein belongs to the protoporphyrinogen/coproporphyrinogen oxidase family. Protoporphyrinogen oxidase subfamily. In terms of assembly, monomer. Homodimer. FAD is required as a cofactor.

It localises to the mitochondrion inner membrane. The catalysed reaction is protoporphyrinogen IX + 3 O2 = protoporphyrin IX + 3 H2O2. It functions in the pathway porphyrin-containing compound metabolism; protoporphyrin-IX biosynthesis; protoporphyrin-IX from protoporphyrinogen-IX: step 1/1. Functionally, catalyzes the 6-electron oxidation of protoporphyrinogen-IX to form protoporphyrin-IX. In Macaca fascicularis (Crab-eating macaque), this protein is Protoporphyrinogen oxidase (PPOX).